The chain runs to 300 residues: GTPase Era (300 aa).

One can recognise an Era-type G domain in the interval 8 to 176 (RCGYVAIVGR…EKVIADHLPE (169 aa)). The segment at 16 to 23 (GRPNVGKS) is G1. 16–23 (GRPNVGKS) contributes to the GTP binding site. The interval 42-46 (QTTRH) is G2. The G3 stretch occupies residues 63-66 (DTPG). Residues 63–67 (DTPGM) and 125–128 (NKTD) contribute to the GTP site. Positions 125 to 128 (NKTD) are G4. Residues 155–157 (ISA) form a G5 region. A KH type-2 domain is found at 199 to 283 (VREKIMRQLG…MLNLWVKVKG (85 aa)).

Belongs to the TRAFAC class TrmE-Era-EngA-EngB-Septin-like GTPase superfamily. Era GTPase family. As to quaternary structure, monomer.

Its subcellular location is the cytoplasm. The protein resides in the cell inner membrane. In terms of biological role, an essential GTPase that binds both GDP and GTP, with rapid nucleotide exchange. Plays a role in 16S rRNA processing and 30S ribosomal subunit biogenesis and possibly also in cell cycle regulation and energy metabolism. The chain is GTPase Era from Pseudomonas fluorescens (strain Pf0-1).